The primary structure comprises 348 residues: Protein arginine N-methyltransferase 1 (348 aa).

The region spanning 20 to 322 is the SAM-dependent MTase PRMT-type domain; sequence EQHYFNSYDH…EKNNRDLNIK (303 aa). S-adenosyl-L-methionine contacts are provided by H33, R42, G66, D88, and E117. Residues E132 and E141 contribute to the active site.

It belongs to the class I-like SAM-binding methyltransferase superfamily. Protein arginine N-methyltransferase family. Homodimer. The dimers can then associate to form a ring-shaped homohexamer. Interacts with NPL3, BRE5, MTR4, SNF2, SUM1, and SSD1.

The protein resides in the nucleus. It carries out the reaction L-arginyl-[protein] + S-adenosyl-L-methionine = N(omega)-methyl-L-arginyl-[protein] + S-adenosyl-L-homocysteine + H(+). It catalyses the reaction L-arginyl-[protein] + 2 S-adenosyl-L-methionine = N(omega),N(omega)-dimethyl-L-arginyl-[protein] + 2 S-adenosyl-L-homocysteine + 2 H(+). Its function is as follows. S-adenosyl-L-methionine-dependent protein-arginine N-methyltransferase that catalyzes both the mono- and asymmetric (type I) dimethylation of the guanidino nitrogens of arginine residues in a variety of RNA-binding proteins such as heterogeneous nuclear ribonucleoproteins (hnRNPs) and small nuclear ribonucleoproteins (snRNPs). Methylates NAB2, NPL3, HRP1 and YRA1, shuttling hnRNPs involved in mRNA processing and export, facilitating their export out of the nucleus. Methylation of NPL3 weakens its interaction with THO2, a component of the TREX (transcription/export) complex important for transcriptional elongation and recruitment of mRNA export factors. Methylates the hnRNP HRB1, but does not influence its subcellular location. Methylates the nucleolar proteins GAR1, NOP1 and NSR1. Methylates the snRNP SNP1 and modulates the cotranscriptional recruitment of splicing factors. Dimethylates free histone H4 (HHF1/HHF2) at 'Arg-4' (H4R3me2a) and plays a role in preservation and establishment of silent chromatin domains. Mono- and dimethylates ribosomal protein S2 (RPS2) at 'Arg-11'. Methylates the catalytic subunit of the SWI/SNF chromatin-remodeling complex SNF2. The protein is Protein arginine N-methyltransferase 1 of Saccharomyces cerevisiae (strain ATCC 204508 / S288c) (Baker's yeast).